A 139-amino-acid polypeptide reads, in one-letter code: uncharacterized protein (139 aa).

Positions 9 to 133 (QAAQIRIARP…DGWRIVFMNS (125 aa)) constitute a VOC domain.

This is an uncharacterized protein from Bacillus subtilis (strain 168).